The chain runs to 223 residues: Cytidylate kinase (223 aa).

Residue 11-19 (GPAGVGKST) participates in ATP binding.

The protein belongs to the cytidylate kinase family. Type 1 subfamily.

Its subcellular location is the cytoplasm. The catalysed reaction is CMP + ATP = CDP + ADP. The enzyme catalyses dCMP + ATP = dCDP + ADP. The protein is Cytidylate kinase of Maridesulfovibrio salexigens (strain ATCC 14822 / DSM 2638 / NCIMB 8403 / VKM B-1763) (Desulfovibrio salexigens).